The sequence spans 189 residues: Ribonuclease M5 2 (189 aa).

In terms of domain architecture, Toprim spans 8-91; that stretch reads SQVIVAEGRD…VFLKRDEAVP (84 aa). 3 residues coordinate Mg(2+): Glu-14, Asp-60, and Asp-62.

Belongs to the ribonuclease M5 family. It depends on Mg(2+) as a cofactor.

It localises to the cytoplasm. The enzyme catalyses Endonucleolytic cleavage of RNA, removing 21 and 42 nucleotides, respectively, from the 5'- and 3'-termini of a 5S-rRNA precursor.. In terms of biological role, required for correct processing of both the 5' and 3' ends of 5S rRNA precursor. Cleaves both sides of a double-stranded region yielding mature 5S rRNA in one step. This is Ribonuclease M5 2 from Ligilactobacillus salivarius (strain UCC118) (Lactobacillus salivarius).